A 68-amino-acid polypeptide reads, in one-letter code: Large ribosomal subunit protein bL33c (68 aa).

The protein belongs to the bacterial ribosomal protein bL33 family.

The protein resides in the plastid. It is found in the chloroplast. The chain is Large ribosomal subunit protein bL33c from Pinus koraiensis (Korean pine).